Reading from the N-terminus, the 664-residue chain is Delta-like protein C (664 aa).

The first 20 residues, 1-20 (MARVLLTCFFILISSHLGKS), serve as a signal peptide directing secretion. At 21–511 (SGVFELKVLS…VNSPALPAAL (491 aa)) the chain is on the extracellular side. Residues 154–198 (VVCDEFYHGEECSDFCRPRNDTFGHFNCDAAGNRICLPGWKGDYC) form the DSL domain. 27 disulfides stabilise this stretch: Cys-156/Cys-165, Cys-169/Cys-181, Cys-189/Cys-198, Cys-203/Cys-214, Cys-207/Cys-220, Cys-222/Cys-231, Cys-234/Cys-245, Cys-240/Cys-251, Cys-253/Cys-262, Cys-269/Cys-281, Cys-275/Cys-291, Cys-293/Cys-302, Cys-309/Cys-320, Cys-314/Cys-329, Cys-331/Cys-340, Cys-347/Cys-358, Cys-352/Cys-368, Cys-370/Cys-379, Cys-386/Cys-397, Cys-391/Cys-406, Cys-408/Cys-417, Cys-424/Cys-435, Cys-429/Cys-444, Cys-446/Cys-455, Cys-462/Cys-473, Cys-467/Cys-482, and Cys-484/Cys-493. N-linked (GlcNAc...) asparagine glycosylation is present at Asn-173. EGF-like domains lie at 199–232 (TEPICLSGCSEENGYCEAPGECKCRIGWEGPLCD), 233–263 (ECTRHPGCLHGTCNQPFQCTCKEGWGGLFCN), and 265–303 (DLNFCTNHKPCRNDATCTNTGQGSYTCICKPGFSGKNCE). Residues 305-341 (ETNECDSNPCKNGGSCNDQENDYTCTCPQGFYGKNCE) enclose the EGF-like 4; calcium-binding domain. EGF-like domains are found at residues 343-380 (SAMTCADGPCFNGGTCMEKGSGSYSCRCPPGYMGSNCE) and 382-418 (KIDRCSSDPCANGGQCLDLGNKATCRCRPGFTGSRCE). One can recognise an EGF-like 7; calcium-binding domain in the interval 420–456 (NIDDCSSNPCQNAGTCVDGINGYTCTCTLGFSGKDCR). The region spanning 458–494 (RSDACSFMPCQNGGTCYTHFSGPVCQCPAGFMGTQCE) is the EGF-like 8 domain. A helical transmembrane segment spans residues 512-532 (IVSFTLGLITLTLVICAAIVV). At 533–664 (LRQMRQNHKA…IEQRVFATEV (132 aa)) the chain is on the cytoplasmic side.

Ubiquitinated by mib, leading to its endocytosis and subsequent degradation. As to expression, strongly expressed in the early retina, where it precedes other delta proteins. Also expressed in cranial ganglia, in sensory epithelia including ear and lateral line and in scattered epidermal cells. In the mesoderm, expression is visible by 50% epiboly; it is expressed subsequently in the tail bud, in stripes in the presomitic mesoderm and in the posterior half of each somite. Also expressed in notochord, blood vessels and pronephros. In contrast to other delta proteins, it is not expressed in the majority of nascent primary neurons. In somites, it marks the posterior part of each formed somite, while deltaD (dld) marks the anterior part.

Its subcellular location is the membrane. Its function is as follows. Acts as a ligand for Notch receptors and is involved in somitogenesis. Can activate Notch receptors. Required in somite segmentation to keep the oscillations of neighboring presomitic mesoderm cells synchronized. In Danio rerio (Zebrafish), this protein is Delta-like protein C (dlc).